The chain runs to 581 residues: 2-succinyl-5-enolpyruvyl-6-hydroxy-3-cyclohexene-1-carboxylate synthase (581 aa).

It belongs to the TPP enzyme family. MenD subfamily. In terms of assembly, homodimer. Requires Mg(2+) as cofactor. Mn(2+) serves as cofactor. It depends on thiamine diphosphate as a cofactor.

It carries out the reaction isochorismate + 2-oxoglutarate + H(+) = 5-enolpyruvoyl-6-hydroxy-2-succinyl-cyclohex-3-ene-1-carboxylate + CO2. It participates in quinol/quinone metabolism; 1,4-dihydroxy-2-naphthoate biosynthesis; 1,4-dihydroxy-2-naphthoate from chorismate: step 2/7. It functions in the pathway cofactor biosynthesis; phylloquinone biosynthesis. Functionally, catalyzes the thiamine diphosphate-dependent decarboxylation of 2-oxoglutarate and the subsequent addition of the resulting succinic semialdehyde-thiamine pyrophosphate anion to isochorismate to yield 2-succinyl-5-enolpyruvyl-6-hydroxy-3-cyclohexene-1-carboxylate (SEPHCHC). This is 2-succinyl-5-enolpyruvyl-6-hydroxy-3-cyclohexene-1-carboxylate synthase from Gloeothece citriformis (strain PCC 7424) (Cyanothece sp. (strain PCC 7424)).